We begin with the raw amino-acid sequence, 421 residues long: Testin (421 aa).

The 108-residue stretch at 92-199 (MILTNPVAAK…GDVKLPREMN (108 aa)) folds into the PET domain. Residues 133–164 (EKQPVAGSEGAQYRKKQLAKQLPAHDQDPSKC) form a disordered region. The span at 155–164 (PAHDQDPSKC) shows a compositional bias: basic and acidic residues. 3 consecutive LIM zinc-binding domains span residues 234–297 (YSCY…CDSE), 299–359 (PRCA…NHAV), and 362–421 (QGCH…KMMS).

This sequence belongs to the prickle / espinas / testin family. Interacts via LIM domain 1 with ZYX. Interacts (via LIM domain 3) with ENAH and VASP. Interacts with ALKBH4, talin, actin, alpha-actinin, GRIP1 and PXN. Interacts (via LIM domain 2) with ACTL7A (via N-terminus). Heterodimer with ACTL7A; the heterodimer interacts with ENAH to form a heterotrimer.

It is found in the cytoplasm. It localises to the cell junction. Its subcellular location is the focal adhesion. Scaffold protein that may play a role in cell adhesion, cell spreading and in the reorganization of the actin cytoskeleton. Plays a role in the regulation of cell proliferation. May act as a tumor suppressor. This chain is Testin (TES), found in Sus scrofa (Pig).